We begin with the raw amino-acid sequence, 461 residues long: Bifunctional protein GlmU (461 aa).

Residues 1–232 (MNLQIIILAA…SFEVQGINNR (232 aa)) are pyrophosphorylase. Residues 8 to 11 (LAAG), K22, Q73, and 78 to 79 (GT) contribute to the UDP-N-acetyl-alpha-D-glucosamine site. D102 is a Mg(2+) binding site. G142, E157, and N230 together coordinate UDP-N-acetyl-alpha-D-glucosamine. N230 is a binding site for Mg(2+). Positions 233-253 (QQLQQLERIWQQRAANQLMEK) are linker. An N-acetyltransferase region spans residues 254–461 (GATLADANRF…WKRPVKRERD (208 aa)). UDP-N-acetyl-alpha-D-glucosamine is bound by residues R336 and K354. Residue H366 is the Proton acceptor of the active site. Positions 369 and 380 each coordinate UDP-N-acetyl-alpha-D-glucosamine. Acetyl-CoA contacts are provided by residues A383, 389-390 (NY), S408, and A426.

It in the N-terminal section; belongs to the N-acetylglucosamine-1-phosphate uridyltransferase family. The protein in the C-terminal section; belongs to the transferase hexapeptide repeat family. As to quaternary structure, homotrimer. Mg(2+) is required as a cofactor.

Its subcellular location is the cytoplasm. It carries out the reaction alpha-D-glucosamine 1-phosphate + acetyl-CoA = N-acetyl-alpha-D-glucosamine 1-phosphate + CoA + H(+). It catalyses the reaction N-acetyl-alpha-D-glucosamine 1-phosphate + UTP + H(+) = UDP-N-acetyl-alpha-D-glucosamine + diphosphate. The protein operates within nucleotide-sugar biosynthesis; UDP-N-acetyl-alpha-D-glucosamine biosynthesis; N-acetyl-alpha-D-glucosamine 1-phosphate from alpha-D-glucosamine 6-phosphate (route II): step 2/2. It functions in the pathway nucleotide-sugar biosynthesis; UDP-N-acetyl-alpha-D-glucosamine biosynthesis; UDP-N-acetyl-alpha-D-glucosamine from N-acetyl-alpha-D-glucosamine 1-phosphate: step 1/1. It participates in bacterial outer membrane biogenesis; LPS lipid A biosynthesis. Functionally, catalyzes the last two sequential reactions in the de novo biosynthetic pathway for UDP-N-acetylglucosamine (UDP-GlcNAc). The C-terminal domain catalyzes the transfer of acetyl group from acetyl coenzyme A to glucosamine-1-phosphate (GlcN-1-P) to produce N-acetylglucosamine-1-phosphate (GlcNAc-1-P), which is converted into UDP-GlcNAc by the transfer of uridine 5-monophosphate (from uridine 5-triphosphate), a reaction catalyzed by the N-terminal domain. The chain is Bifunctional protein GlmU from Legionella pneumophila (strain Corby).